Reading from the N-terminus, the 513-residue chain is Voltage-gated potassium channel regulatory subunit KCNG1 (513 aa).

Topologically, residues 1-224 are cytoplasmic; it reads MTLLPGDNSD…DMVERPHSGL (224 aa). The disordered stretch occupies residues 184–204; sequence EEDDALDSEGRDSEGPAEGEG. Positions 191 to 204 are enriched in basic and acidic residues; that stretch reads SEGRDSEGPAEGEG. The chain crosses the membrane as a helical span at residues 225 to 246; it reads PGKVFACLSVLFVTVTAVNLSV. Residues 247-267 are Extracellular-facing; the sequence is STLPSLREEEEQGHCSQMCHN. The chain crosses the membrane as a helical span at residues 268-289; it reads VFIVESVCVGWFSLEFLLRLIQ. Residues 290–300 lie on the Cytoplasmic side of the membrane; the sequence is APSKFAFLRSP. Residues 301–321 form a helical membrane-spanning segment; that stretch reads LTLIDLVAILPYYITLLVDGA. Residues 322–338 lie on the Extracellular side of the membrane; that stretch reads AAGRRKPGAGNSYLDKV. Residues 339 to 359 form a helical; Voltage-sensor membrane-spanning segment; it reads GLVLRVLRALRILYVMRLARH. Residues 360–374 lie on the Cytoplasmic side of the membrane; it reads SLGLQTLGLTARRCT. Residues 375-396 form a helical membrane-spanning segment; that stretch reads REFGLLLLFLCVAIALFAPLLY. The Extracellular portion of the chain corresponds to 397–411; that stretch reads VIENEMADSPEFTSI. Residues 412–423 constitute an intramembrane region (helical); that stretch reads PACYWWAVITMT. Residues 424–429 carry the Selectivity filter motif; sequence TVGYGD. Residues 424–431 lie within the membrane without spanning it; that stretch reads TVGYGDMV. At 432-438 the chain is on the extracellular side; sequence PRSTPGQ. The chain crosses the membrane as a helical span at residues 439–467; it reads VVALSSILSGILLMAFPVTSIFHTFSRSY. Topologically, residues 468-513 are cytoplasmic; that stretch reads LELKQEQERVMFRRAQFLIKTKSQLSVSQDSDILFGSASSDTRDNN.

The protein belongs to the potassium channel family. G (TC 1.A.1.2) subfamily. Kv6.1/KCNG1 sub-subfamily. As to quaternary structure, heterotetramer with KCNB1. Heterotetramer with KCNB2. In terms of tissue distribution, expressed in brain and placenta, and at much lower levels in kidney and pancreas.

It is found in the cell membrane. Regulatory alpha-subunit of the voltage-gated potassium (Kv) channel which, when coassembled with KCNB1 or KCNB2, can modulate their expression and their gating kinetics by acting on deactivation upon repolarization and inactivation during maintained depolarization. Potassium channel subunit that does not form functional channels by itself. The chain is Voltage-gated potassium channel regulatory subunit KCNG1 from Homo sapiens (Human).